We begin with the raw amino-acid sequence, 185 residues long: uncharacterized protein (185 aa).

Residues 9–169 (VILELAKESD…NGREDDKPLL (161 aa)) enclose the N-acetyltransferase domain.

This is an uncharacterized protein from Bacillus subtilis (strain 168).